The chain runs to 962 residues: RNA-binding protein 15 (962 aa).

Basic and acidic residues-rich tracts occupy residues 1-10, 34-52, and 59-72; these read MRSAGREPLP, LRRD…ERSP, and RGGE…ERSK. Positions 1–167 are disordered; that stretch reads MRSAGREPLP…SAPGGGDGVE (167 aa). The span at 82 to 94 shows a compositional bias: low complexity; the sequence is GSSSGKTDSGGSR. Residues 97 to 112 are compositionally biased toward basic and acidic residues; the sequence is LHLDKSSSRGGSREYE. Phosphoserine is present on Ser-108. The segment covering 118-129 has biased composition (low complexity); that stretch reads SSSRLHSYSSPS. Positions 134–149 are enriched in gly residues; the sequence is SGGGESRSSSRGGGGE. A compositionally biased stretch (low complexity) spans 150–159; sequence SRSSGAASSA. The RRM 1 domain occupies 169 to 251; the sequence is KTLKISELGS…RPLKIEAVYV (83 aa). Ser-178, Ser-207, and Ser-209 each carry phosphoserine. Residue Lys-245 forms a Glycyl lysine isopeptide (Lys-Gly) (interchain with G-Cter in SUMO2) linkage. Phosphoserine is present on residues Ser-252, Ser-256, and Ser-258. The segment at 257-297 is disordered; sequence RSPLDKDAYAPSSSVVGTSVGSHRHAPGGGGGQRSLSPGGA. Tyr-265 carries the post-translational modification Phosphotyrosine. Low complexity predominate over residues 268–277; the sequence is SSSVVGTSVG. Phosphoserine occurs at positions 291, 293, and 364. RRM domains lie at 373–450 and 454–528; these read RTLF…YGKA and TRLW…FADT. Glycyl lysine isopeptide (Lys-Gly) (interchain with G-Cter in SUMO2) cross-links involve residues Lys-405, Lys-419, and Lys-444. Lys-449 is subject to N6-acetyllysine. Basic and acidic residues-rich tracts occupy residues 553-580 and 612-661; these read GHRA…RDLY and SLDR…SERP. The disordered stretch occupies residues 553–779; sequence GHRAPDPLRS…KQDGGTAPVA (227 aa). At Thr-567 the chain carries Phosphothreonine. Position 577 is an asymmetric dimethylarginine; alternate; by PRMT1 (Arg-577). At Arg-577 the chain carries Omega-N-methylarginine; alternate; by PRMT1. Ser-621, Ser-655, Ser-670, Ser-674, and Ser-701 each carry phosphoserine. Basic and acidic residues-rich tracts occupy residues 673 to 692, 701 to 729, and 742 to 751; these read RSPE…DRSS, SPVR…AERD, and NPLKKEDRSD. Lys-745 participates in a covalent cross-link: Glycyl lysine isopeptide (Lys-Gly) (interchain with G-Cter in SUMO2). Residues 754-771 show a composition bias toward low complexity; the sequence is APSASTSSSKQKPPSQKQ. Phosphoserine occurs at positions 768 and 782. Residues 778 to 957 enclose the SPOC domain; sequence VAASSPKLCL…YLVMIIVRAK (180 aa). The interval 866-885 is disordered; it reads GSSDSRSSSSSATSDTAAST. Low complexity predominate over residues 867–885; it reads SSDSRSSSSSATSDTAAST. A Phosphoserine modification is found at Ser-936.

It belongs to the RRM Spen family. As to quaternary structure, component of the WMM complex, a N6-methyltransferase complex composed of a catalytic subcomplex, named MAC, and of an associated subcomplex, named MACOM. The MAC subcomplex is composed of METTL3 and METTL14. The MACOM subcomplex is composed of WTAP, ZC3H13, CBLL1/HAKAI, VIRMA, and, in some cases of RBM15 (RBM15 or RBM15B). Also a component of a MACOM-like complex, named WTAP complex, composed of WTAP, ZC3H13, CBLL1, VIRMA, RBM15, BCLAF1 and THRAP3. Interacts with RBPJ. Interacts (via SPOC domain) with SETD1B. Interacts with NXF1, the interaction is required to promote mRNA export. Interacts with SF3B1. In terms of processing, methylated at Arg-577 by PRMT1, leading to promote ubiquitination by CNOT4 and subsequent degradation by the proteasome. Ubiquitinated by CNOT4 following methylation at Arg-577 by PRMT1.

The protein localises to the nucleus speckle. The protein resides in the nucleus. It localises to the nucleoplasm. It is found in the nucleus envelope. Its subcellular location is the nucleus membrane. In terms of biological role, RNA-binding protein that acts as a key regulator of N6-methyladenosine (m6A) methylation of RNAs, thereby regulating different processes, such as hematopoietic cell homeostasis, alternative splicing of mRNAs and X chromosome inactivation mediated by Xist RNA. Associated component of the WMM complex, a complex that mediates N6-methyladenosine (m6A) methylation of RNAs, a modification that plays a role in the efficiency of mRNA splicing and RNA processing. Plays a key role in m6A methylation, possibly by binding target RNAs and recruiting the WMM complex. Involved in random X inactivation mediated by Xist RNA: acts by binding Xist RNA and recruiting the WMM complex, which mediates m6A methylation, leading to target YTHDC1 reader on Xist RNA and promoting transcription repression activity of Xist. Required for the development of multiple tissues, such as the maintenance of the homeostasis of long-term hematopoietic stem cells and for megakaryocyte (MK) and B-cell differentiation. Regulates megakaryocyte differentiation by regulating alternative splicing of genes important for megakaryocyte differentiation; probably regulates alternative splicing via m6A regulation. Required for placental vascular branching morphogenesis and embryonic development of the heart and spleen. Acts as a regulator of thrombopoietin response in hematopoietic stem cells by regulating alternative splicing of MPL. May also function as an mRNA export factor, stimulating export and expression of RTE-containing mRNAs which are present in many retrotransposons that require to be exported prior to splicing. High affinity binding of pre-mRNA to RBM15 may allow targeting of the mRNP to the export helicase DBP5 in a manner that is independent of splicing-mediated NXF1 deposition, resulting in export prior to splicing. May be implicated in HOX gene regulation. The polypeptide is RNA-binding protein 15 (Mus musculus (Mouse)).